Reading from the N-terminus, the 474-residue chain is Glycogen synthase (474 aa).

Position 12 (Lys12) interacts with ADP-alpha-D-glucose.

This sequence belongs to the glycosyltransferase 1 family. Bacterial/plant glycogen synthase subfamily.

The enzyme catalyses [(1-&gt;4)-alpha-D-glucosyl](n) + ADP-alpha-D-glucose = [(1-&gt;4)-alpha-D-glucosyl](n+1) + ADP + H(+). It participates in glycan biosynthesis; glycogen biosynthesis. Its function is as follows. Synthesizes alpha-1,4-glucan chains using ADP-glucose. This Xanthomonas campestris pv. campestris (strain 8004) protein is Glycogen synthase.